The following is a 465-amino-acid chain: Iron-sulfur cluster assembly SufBD family protein SAUSA300_0822 (465 aa).

Belongs to the iron-sulfur cluster assembly SufBD family.

The protein is Iron-sulfur cluster assembly SufBD family protein SAUSA300_0822 of Staphylococcus aureus (strain USA300).